A 394-amino-acid polypeptide reads, in one-letter code: 3-amino-4-hydroxybenzoate 2-monooxygenase (394 aa).

FAD is bound by residues Ala16 and Arg109. Tyr214 serves as the catalytic Proton acceptor. An FAD-binding site is contributed by Asp287.

This sequence belongs to the 6-hydroxynicotinate 3-monooxygenase family. FAD serves as cofactor.

The catalysed reaction is 3-amino-4-hydroxybenzoate + NADPH + O2 + H(+) = 3-amino-2,4-dihydroxybenzoate + NADP(+) + H2O. It participates in antibiotic biosynthesis. In terms of biological role, part of a gene cluster involved in the biosynthesis of cremeomycin, a light-sensitive o-diazoquinone with antibacterial and antiproliferative effects. Catalyzes the hydroxylation of 3-amino-4-hydroxybenzoate (3,4-AHBA) to 3-amino-2,4-dihydroxybenzoate (3,2,4-ADHBA). In Streptomyces cremeus, this protein is 3-amino-4-hydroxybenzoate 2-monooxygenase.